The following is a 932-amino-acid chain: Isoleucine--tRNA ligase (932 aa).

Residues 59 to 69 (PYANGTIHIGH) carry the 'HIGH' region motif. Glu-562 provides a ligand contact to L-isoleucyl-5'-AMP. The 'KMSKS' region signature appears at 603 to 607 (KMSKS). Lys-606 is a binding site for ATP. The Zn(2+) site is built by Cys-899, Cys-902, Cys-915, and Cys-918.

It belongs to the class-I aminoacyl-tRNA synthetase family. IleS type 1 subfamily. In terms of assembly, monomer. Zn(2+) serves as cofactor.

Its subcellular location is the cytoplasm. It carries out the reaction tRNA(Ile) + L-isoleucine + ATP = L-isoleucyl-tRNA(Ile) + AMP + diphosphate. Its function is as follows. Catalyzes the attachment of isoleucine to tRNA(Ile). As IleRS can inadvertently accommodate and process structurally similar amino acids such as valine, to avoid such errors it has two additional distinct tRNA(Ile)-dependent editing activities. One activity is designated as 'pretransfer' editing and involves the hydrolysis of activated Val-AMP. The other activity is designated 'posttransfer' editing and involves deacylation of mischarged Val-tRNA(Ile). The chain is Isoleucine--tRNA ligase from Pasteurella multocida (strain Pm70).